We begin with the raw amino-acid sequence, 666 residues long: Nuclear distribution protein nudE homolog 1 (666 aa).

The stretch at 14-195 forms a coiled coil; the sequence is EEEIAHYREK…KDQLARAIAT (182 aa). Disordered regions lie at residues 40–64, 220–310, 369–388, and 397–666; these read EFQQ…KQQA, DDIN…SGIP, KRVT…PAPH, and DHNT…KVKK. Residues 251–274 show a composition bias toward polar residues; the sequence is RSGTMSSIPVASPSTKRFSQQIPH. 2 stretches are compositionally biased toward low complexity: residues 275-287 and 372-383; these read SPSF…STTS and TSTTSTTSSTTT. A compositionally biased stretch (polar residues) spans 400–410; the sequence is TTPTAQSQQFP. 3 stretches are compositionally biased toward low complexity: residues 449–465, 473–485, and 536–554; these read PTFR…LPSR, ASGS…SGTA, and SATP…STSN. Composition is skewed to polar residues over residues 587-599 and 614-638; these read RQSL…TPTT and SSLS…SGRP.

It belongs to the nudE family. As to quaternary structure, self-associates. Interacts with PAC1.

It is found in the cytoplasm. It localises to the cytoskeleton. Functionally, required for nuclear migration. The sequence is that of Nuclear distribution protein nudE homolog 1 (NDE1) from Cryptococcus neoformans var. neoformans serotype D (strain JEC21 / ATCC MYA-565) (Filobasidiella neoformans).